The chain runs to 539 residues: Eukaryotic translation initiation factor 3 subunit L (539 aa).

The PCI domain occupies 306–514; it reads TFSDILLYVQ…IHIADTKVSH (209 aa).

Belongs to the eIF-3 subunit L family. As to quaternary structure, component of the eukaryotic translation initiation factor 3 (eIF-3) complex. The eIF-3 complex interacts with pix.

Its subcellular location is the cytoplasm. Functionally, component of the eukaryotic translation initiation factor 3 (eIF-3) complex, which is involved in protein synthesis of a specialized repertoire of mRNAs and, together with other initiation factors, stimulates binding of mRNA and methionyl-tRNAi to the 40S ribosome. The eIF-3 complex specifically targets and initiates translation of a subset of mRNAs involved in cell proliferation. The sequence is that of Eukaryotic translation initiation factor 3 subunit L from Drosophila willistoni (Fruit fly).